Consider the following 48-residue polypeptide: Phospholipase A2 superbin d (48 aa).

The Ca(2+) site is built by Tyr28, Gly30, and Gly32. The cysteines at positions 29 and 45 are disulfide-linked. The active site involves His48.

Ca(2+) is required as a cofactor. Expressed by the venom gland.

It is found in the secreted. The catalysed reaction is a 1,2-diacyl-sn-glycero-3-phosphocholine + H2O = a 1-acyl-sn-glycero-3-phosphocholine + a fatty acid + H(+). Functionally, snake venom phospholipase A2 (PLA2) that inhibits collagen-induced platelet aggregation. In terms of inhibition of platelet aggregation, superbin d is less potent as superbin a, b, and c. PLA2 catalyzes the calcium-dependent hydrolysis of the 2-acyl groups in 3-sn-phosphoglycerides. This is Phospholipase A2 superbin d from Austrelaps superbus (Lowland copperhead snake).